Consider the following 379-residue polypeptide: Eukaryotic translation initiation factor 3 subunit H (379 aa).

An MPN domain is found at 17-170; sequence VQIDSLVVMK…IRAYRLSTKA (154 aa). The span at 280–291 shows a compositional bias: basic and acidic residues; the sequence is RQAENEQREARG. Residues 280-300 form a disordered region; that stretch reads RQAENEQREARGEPPLSFDDI.

Belongs to the eIF-3 subunit H family. In terms of assembly, component of the eukaryotic translation initiation factor 3 (eIF-3) complex.

Its subcellular location is the cytoplasm. In terms of biological role, component of the eukaryotic translation initiation factor 3 (eIF-3) complex, which is involved in protein synthesis of a specialized repertoire of mRNAs and, together with other initiation factors, stimulates binding of mRNA and methionyl-tRNAi to the 40S ribosome. The eIF-3 complex specifically targets and initiates translation of a subset of mRNAs involved in cell proliferation. The chain is Eukaryotic translation initiation factor 3 subunit H from Brugia malayi (Filarial nematode worm).